Here is a 346-residue protein sequence, read N- to C-terminus: MSWLTNLPPGLKNVFGKKDTPENLWIKCPKSGDLVYKDDLEASLFVTPAGAHLRVGPDLRFKSMFDGSEYEELELPEVVKDPLKFKDDRKYVDRLKSSRAKTGREDCMAAAIGKIGKQNAVVLVQDFAFMGGSLGMAAGEAFITAAEKALETKSALIICTASGGARMQEGALSLMQMPRTTVAITELKDASLPYIVVLTDPTTGGVAASYAMIGDIHIGEPEAMVAFAGARVIEQTIREKLPEGFQRAEFLRERGMVDMVVDRRDLPAKLGQILSMLMGGKPLPEVEPIAVADVEELEAAEAEAAPDEVVEVEAPAVDEIVEEKPAATKAKPRSKAKSKAAPKTDE.

The CoA carboxyltransferase N-terminal domain maps to 24 to 292 (LWIKCPKSGD…LPEVEPIAVA (269 aa)). A compositionally biased stretch (acidic residues) spans 300–311 (AEAEAAPDEVVE). The disordered stretch occupies residues 300–346 (AEAEAAPDEVVEVEAPAVDEIVEEKPAATKAKPRSKAKSKAAPKTDE). The span at 330-340 (AKPRSKAKSKA) shows a compositional bias: basic residues.

The protein belongs to the AccD/PCCB family. In terms of assembly, acetyl-CoA carboxylase is a heterohexamer composed of biotin carboxyl carrier protein (AccB), biotin carboxylase (AccC) and two subunits each of ACCase subunit alpha (AccA) and ACCase subunit beta (AccD).

The protein resides in the cytoplasm. It catalyses the reaction N(6)-carboxybiotinyl-L-lysyl-[protein] + acetyl-CoA = N(6)-biotinyl-L-lysyl-[protein] + malonyl-CoA. It functions in the pathway lipid metabolism; malonyl-CoA biosynthesis; malonyl-CoA from acetyl-CoA: step 1/1. In terms of biological role, component of the acetyl coenzyme A carboxylase (ACC) complex. Biotin carboxylase (BC) catalyzes the carboxylation of biotin on its carrier protein (BCCP) and then the CO(2) group is transferred by the transcarboxylase to acetyl-CoA to form malonyl-CoA. This is Acetyl-coenzyme A carboxylase carboxyl transferase subunit beta from Hirschia baltica (strain ATCC 49814 / DSM 5838 / IFAM 1418).